We begin with the raw amino-acid sequence, 1454 residues long: Alpha-2-macroglobulin-like protein 1 (1454 aa).

The signal sequence occupies residues 1–17; the sequence is MWAQLLLGMLALSPAIA. The cysteines at positions 40 and 78 are disulfide-linked. N-linked (GlcNAc...) asparagine glycosylation occurs at asparagine 120. 2 cysteine pairs are disulfide-bonded: cysteine 241–cysteine 291 and cysteine 259–cysteine 279. N-linked (GlcNAc...) asparagine glycans are attached at residues asparagine 281 and asparagine 409. 7 disulfides stabilise this stretch: cysteine 464–cysteine 557, cysteine 589–cysteine 769, cysteine 819–cysteine 847, cysteine 845–cysteine 881, cysteine 919–cysteine 1307, cysteine 1075–cysteine 1123, and cysteine 1338–cysteine 1453. Positions 695–726 are bait region; sequence SHRSPEYSTAMGAGGGHPEAFESSTPLHQAED. The N-linked (GlcNAc...) asparagine glycan is linked to asparagine 857. Positions 970–973 form a cross-link, isoglutamyl cysteine thioester (Cys-Gln); sequence CGEQ. A glycan (N-linked (GlcNAc...) asparagine) is linked at asparagine 1020.

This sequence belongs to the protease inhibitor I39 (alpha-2-macroglobulin) family. In terms of assembly, monomer. In the epidermis, expressed predominantly in the granular layer at the apical edge of keratinocytes (at protein level). Also detected in placenta, testis and thymus but not in epithelia of kidney, lung, small intestine or colon.

The protein localises to the secreted. Functionally, is able to inhibit all four classes of proteinases by a unique 'trapping' mechanism. This protein has a peptide stretch, called the 'bait region' which contains specific cleavage sites for different proteinases. When a proteinase cleaves the bait region, a conformational change is induced in the protein which traps the proteinase. The entrapped enzyme remains active against low molecular weight substrates (activity against high molecular weight substrates is greatly reduced). Following cleavage in the bait region a thioester bond is hydrolyzed and mediates the covalent binding of the protein to the proteinase. Displays inhibitory activity against chymotrypsin, papain, thermolysin, subtilisin A and, to a lesser extent, elastase but not trypsin. May play an important role during desquamation by inhibiting extracellular proteases. The chain is Alpha-2-macroglobulin-like protein 1 from Homo sapiens (Human).